Reading from the N-terminus, the 897-residue chain is MGDIKNKDHTTSVNHNLMASAGNYTAEKEIGKGSFATVYRGHLTSDKSQHVAIKEVSRAKLKNKKLLENLEIEIAILKKIKHPHIVGLIDCERTSTDFYLIMEYCALGDLTFLLKRRKELMENHPLLRTVFEKYPPPSENHNGLHRAFVLSYLQQLASALKFLRSKNLVHRDIKPQNLLLSTPLIGYHDSKSFHELGFVGIYNLPILKIADFGFARFLPNTSLAETLCGSPLYMAPEILNYQKYNAKADLWSVGTVVFEMCCGTPPFRASNHLELFKKIKRANDVITFPSYCNIEPELKELICSLLTFDPAQRIGFEEFFANKVVNEDLSSYELEDDLPELESKSKGIVESNMFVSEYLSKQPKSPNSNLAGHQSMADNPAELSDALKNSNILTAPAVKTDHTQAVDKKASNNKYHNSLVSDRSFEREYVVVEKKSVEVNSLADEVAQAGFNPNPIKHPTSTQNQNVLLNEQFSPNNQQYFQNQGENPRLLRATSSSSGGSDGSRRPSLVDRRLSISSLNPSNALSRALGIASTRLFGGANQQQQQQQITSSPPYSQTLLNSQLFHELTENIILRIDHLQHPETLKLDNTNIVSILESLAAKAFVVYSYAEVKFSQIVPLSTTLKGMANFENRRSMDSNAIAEEQDSDDAEEEDETLKKYKEDCLSTKTFGKGRTLSATSQLSATFNKLPRSEMILLCNEAIVLYMKALSILSKSMQVTSNWWYESQEKSCSLRVNVLVQWLREKFNECLEKADFLRLKINDLRFKHASEVAENQTLEEKGSSEEPVYLEKLLYDRALEISKMAAHMELKGENLYNCELAYATSLWMLETSLDDDDFTNAYGDYPFKTNIHLKSNDVEDKEKYHSVLDENDRIIIRKYIDSIANRLKILRQKMNHQN.

The Protein kinase domain maps to 24-325; sequence YTAEKEIGKG…FEEFFANKVV (302 aa). Residues 30-38 and Lys-54 contribute to the ATP site; that span reads IGKGSFATV. Ser-34 carries the post-translational modification Phosphoserine. Phosphothreonine is present on Thr-129. Asp-172 serves as the catalytic Proton acceptor. Thr-226 is subject to Phosphothreonine; by autocatalysis. 3 positions are modified to phosphoserine: Ser-304, Ser-365, and Ser-390. The LIR signature appears at 429–432; sequence YVVV. The segment at 490 to 509 is disordered; it reads LLRATSSSSGGSDGSRRPSL. A phosphoserine; by PKA mark is found at Ser-508 and Ser-515. Phosphoserine occurs at positions 533, 551, and 552. Phosphothreonine is present on Thr-590. Ser-621, Ser-635, Ser-638, Ser-647, Ser-677, Ser-680, Ser-683, Ser-769, and Ser-783 each carry phosphoserine. The tract at residues 880 to 886 is required for Cvt trafficking; it reads DSIANRL.

This sequence belongs to the protein kinase superfamily. Ser/Thr protein kinase family. APG1/unc-51/ULK1 subfamily. Homodimer. Dimerization requires the presence of ATG13. Forms a ternary complex with ATG13 and ATG17. Also interacts with ATG11. Post-translationally, autophosphorylated at Thr-226 and Ser-390. The phosphorylation state may play a role in the induction of protein degradation upon starvation. Phosphorylation at Thr-226 within the activation loop is required for protein kinase activity whereas phosphorylation at Ser-34 leads to inhibition of kinase activity. Phosphorylation of Ser-508 and Ser-515 by PKA is required to induce autophagy but not for kinase activity.

It is found in the cytoplasm. Its subcellular location is the preautophagosomal structure membrane. It carries out the reaction L-seryl-[protein] + ATP = O-phospho-L-seryl-[protein] + ADP + H(+). The enzyme catalyses L-threonyl-[protein] + ATP = O-phospho-L-threonyl-[protein] + ADP + H(+). Its activity is regulated as follows. Activated by hypophosphorylated form of ATG13 (present in nitrogen starvation conditions). Also activated by autophopsphorylation of Thr-226 and inhibited by phosphorylation of Ser-34. Functionally, serine/threonine protein kinase involved in the cytoplasm to vacuole transport (Cvt) and found to be essential in autophagy, where it is required for the formation of autophagosomes. Involved in the clearance of protein aggregates which cannot be efficiently cleared by the proteasome. Required for selective autophagic degradation of the nucleus (nucleophagy) as well as for mitophagy which contributes to regulate mitochondrial quantity and quality by eliminating the mitochondria to a basal level to fulfill cellular energy requirements and preventing excess ROS production. Also involved in endoplasmic reticulum-specific autophagic process, in selective removal of ER-associated degradation (ERAD) substrates. Plays a key role in ATG9 and ATG23 cycling through the pre-autophagosomal structure and is necessary to promote ATG18 binding to ATG9 through phosphorylation of ATG9. Catalyzes phosphorylation of ATG4, decreasing the interaction between ATG4 and ATG8 and impairing deconjugation of PE-conjugated forms of ATG8. Finally, ATG1 is also required for the maintenance of cell viability under starvation and for glycogen storage during stationary phase. Plays a role in genome stability through suppression of abnormal mitosis under starvation, and in regulation of filamentous growth. This chain is Serine/threonine-protein kinase ATG1, found in Saccharomyces cerevisiae (strain YJM789) (Baker's yeast).